The primary structure comprises 81 residues: Small ribosomal subunit protein bS16 (81 aa).

The protein belongs to the bacterial ribosomal protein bS16 family.

The chain is Small ribosomal subunit protein bS16 from Neisseria gonorrhoeae (strain ATCC 700825 / FA 1090).